A 275-amino-acid chain; its full sequence is MNYNNPTQLQAAILDWAGTVVDFGSFAPTQIFVEAFAEFDVQVSIEEARGPMGMGKWDHIRTLCDQPQVAERYRKVFGRTPTDDDVTAIYNRFMPLQIEKIAEHSALIPGALETIANLRQQGIKIGSCSGYPKQVMDKVVALAATNGYVADHVVATDEVPNGRPWPAQALANVIALGIDDVAACVKIDDTVPGILEGRRAGMWTVALICSGNALGLDYEGYRALGSDALASERKRIHALFEGSRPHYMIDTITDLPEVIADINKRLANGEMPQSS.

Asp15 serves as the catalytic Nucleophile. Residues Asp15 and Ala17 each contribute to the Mg(2+) site. Catalysis depends on Lys56, which acts as the Schiff-base intermediate with substrate. Asp189 serves as a coordination point for Mg(2+).

This sequence belongs to the HAD-like hydrolase superfamily. PhnX family. As to quaternary structure, homodimer. It depends on Mg(2+) as a cofactor.

The catalysed reaction is phosphonoacetaldehyde + H2O = acetaldehyde + phosphate + H(+). Involved in phosphonate degradation. The chain is Phosphonoacetaldehyde hydrolase from Pseudomonas fluorescens (strain Pf0-1).